Reading from the N-terminus, the 1238-residue chain is Inner capsid protein VP2 (1238 aa).

Positions 1 to 35 (MSTSAKKTPESKTEDKIEPVIEQTSNDKPEPPPNK) are disordered. Over residues 7 to 30 (KTPESKTEDKIEPVIEQTSNDKPE) the composition is skewed to basic and acidic residues.

Belongs to the turreted BTV-fold inner capsid family. As to quaternary structure, homodecamer; each decamer is made up of two conformers of VP2, called VP2A and VP2B. 12 homodecamers assemble to form an icosahedral capsid.

The protein localises to the virion. Functionally, inner capsid protein that self-assembles to form an icosahedral capsid with a T=2 symmetry, which consists of 120 copies of VP2, with channels at each of its five-fold vertices. This capsid constitutes the innermost concentric layer of the viral mature particle. This Cryphonectria parasitica (Chestnut blight fungus) protein is Inner capsid protein VP2 (S2).